The sequence spans 339 residues: MIEYFCEYMFPLTVIALKVVAITIPLILCVAYLTYAERRVIGLMQLRRGPNVVGPFGLLQPIADAVKLLFKEPIIPTDADKILFILAPIITFVLSLIGWAVIPFSSGVVLADINVGVLYILAISSLSVYGIIIAGWASNSKYAFLGAIRSSAQMISYEVSMGLVIITVLLTTGTLNLSGIIEAQKTLPWWIDLMLLPMSIVFFISVLAETNRLPFDLPEAESELVAGYNVEYSSMGFALFFLGEYANMILVSAMTTTLFLGGYLPPFNLSFLDCIPGFFWFVFKVGFLLFCFLWIRATLPRYRYDQLMRLGWKVFLPFTLFGVVLVSSVLFYTDNLPSV.

Transmembrane regions (helical) follow at residues 10–30 (FPLT…ILCV), 50–70 (PNVV…KLLF), 82–102 (ILFI…WAVI), 115–135 (VGVL…IIAG), 161–181 (MGLV…SGII), 187–207 (LPWW…ISVL), 235–255 (MGFA…SAMT), 275–295 (IPGF…FLWI), and 311–331 (GWKV…SVLF).

This sequence belongs to the complex I subunit 1 family. NDH-1 is composed of 14 different subunits. Subunits NuoA, H, J, K, L, M, N constitute the membrane sector of the complex.

It is found in the cell inner membrane. It catalyses the reaction a quinone + NADH + 5 H(+)(in) = a quinol + NAD(+) + 4 H(+)(out). Functionally, NDH-1 shuttles electrons from NADH, via FMN and iron-sulfur (Fe-S) centers, to quinones in the respiratory chain. The immediate electron acceptor for the enzyme in this species is believed to be ubiquinone. Couples the redox reaction to proton translocation (for every two electrons transferred, four hydrogen ions are translocated across the cytoplasmic membrane), and thus conserves the redox energy in a proton gradient. This subunit may bind ubiquinone. This chain is NADH-quinone oxidoreductase subunit H, found in Rickettsia prowazekii (strain Madrid E).